The following is a 211-amino-acid chain: N-(5'-phosphoribosyl)anthranilate isomerase (211 aa).

The protein belongs to the TrpF family.

The enzyme catalyses N-(5-phospho-beta-D-ribosyl)anthranilate = 1-(2-carboxyphenylamino)-1-deoxy-D-ribulose 5-phosphate. It participates in amino-acid biosynthesis; L-tryptophan biosynthesis; L-tryptophan from chorismate: step 3/5. The sequence is that of N-(5'-phosphoribosyl)anthranilate isomerase from Hyphomonas neptunium (strain ATCC 15444).